The following is a 469-amino-acid chain: ATP synthase subunit beta (469 aa).

Residue 156–163 (GGAGVGKT) participates in ATP binding.

The protein belongs to the ATPase alpha/beta chains family. As to quaternary structure, F-type ATPases have 2 components, CF(1) - the catalytic core - and CF(0) - the membrane proton channel. CF(1) has five subunits: alpha(3), beta(3), gamma(1), delta(1), epsilon(1). CF(0) has three main subunits: a(1), b(2) and c(9-12). The alpha and beta chains form an alternating ring which encloses part of the gamma chain. CF(1) is attached to CF(0) by a central stalk formed by the gamma and epsilon chains, while a peripheral stalk is formed by the delta and b chains.

The protein resides in the cell membrane. It carries out the reaction ATP + H2O + 4 H(+)(in) = ADP + phosphate + 5 H(+)(out). In terms of biological role, produces ATP from ADP in the presence of a proton gradient across the membrane. The catalytic sites are hosted primarily by the beta subunits. The polypeptide is ATP synthase subunit beta (Bacillus anthracis (strain CDC 684 / NRRL 3495)).